Consider the following 283-residue polypeptide: Bifunctional protein FolD (283 aa).

Residues 164–166 (GSS), Ile189, and Ile230 each bind NADP(+).

It belongs to the tetrahydrofolate dehydrogenase/cyclohydrolase family. In terms of assembly, homodimer.

It catalyses the reaction (6R)-5,10-methylene-5,6,7,8-tetrahydrofolate + NADP(+) = (6R)-5,10-methenyltetrahydrofolate + NADPH. The catalysed reaction is (6R)-5,10-methenyltetrahydrofolate + H2O = (6R)-10-formyltetrahydrofolate + H(+). Its pathway is one-carbon metabolism; tetrahydrofolate interconversion. In terms of biological role, catalyzes the oxidation of 5,10-methylenetetrahydrofolate to 5,10-methenyltetrahydrofolate and then the hydrolysis of 5,10-methenyltetrahydrofolate to 10-formyltetrahydrofolate. The chain is Bifunctional protein FolD from Fusobacterium nucleatum subsp. nucleatum (strain ATCC 25586 / DSM 15643 / BCRC 10681 / CIP 101130 / JCM 8532 / KCTC 2640 / LMG 13131 / VPI 4355).